Consider the following 199-residue polypeptide: MARYTGPAWKLSRRLGISLTETGKEIAKRPYAPGQHGNSRRKMSEYGLQLQAKQTLRHMYGVNERQFNRIFNDAGKMPGIHGENFMFLLEARLDNVVYRMGMARTRRAARQLVNHGHIQVDGARVDIPSFRVKPGQTISVREKSKNFVVIKEALEVAPATKDFVTFDAEKLEGTFVRLPERSELNDQIQEQLVVEYYSR.

The S4 RNA-binding domain occupies 91 to 153; it reads ARLDNVVYRM…SKNFVVIKEA (63 aa).

The protein belongs to the universal ribosomal protein uS4 family. In terms of assembly, part of the 30S ribosomal subunit. Contacts protein S5. The interaction surface between S4 and S5 is involved in control of translational fidelity.

Its function is as follows. One of the primary rRNA binding proteins, it binds directly to 16S rRNA where it nucleates assembly of the body of the 30S subunit. Functionally, with S5 and S12 plays an important role in translational accuracy. The polypeptide is Small ribosomal subunit protein uS4 (Exiguobacterium sibiricum (strain DSM 17290 / CCUG 55495 / CIP 109462 / JCM 13490 / 255-15)).